A 759-amino-acid polypeptide reads, in one-letter code: Protein AKNAD1 (759 aa).

The interval 169 to 246 is disordered; sequence TDQLNPKKDG…HTEKASSGNR (78 aa). The segment covering 181–192 has biased composition (polar residues); it reads SNKPGSPTMTEE. The stretch at 371–482 forms a coiled coil; that stretch reads QKISQGKQMC…EDVKDKVDES (112 aa). Polar residues predominate over residues 484–496; sequence YTSAPSLPVSSPV. Disordered regions lie at residues 484 to 543, 634 to 654, 678 to 723, and 735 to 759; these read YTSA…QEAP, EKAPHSDSTPNSDTGHSFCSD, CRKE…PSLA, and PDTSKSSPTPGWQEAELGLENMKSQ. Low complexity predominate over residues 497–509; the sequence is TLDDLASTSSSLS. A compositionally biased stretch (polar residues) spans 639–654; the sequence is SDSTPNSDTGHSFCSD. Residues 679–688 are compositionally biased toward basic and acidic residues; the sequence is RKEPPKEFHY. Polar residues predominate over residues 735-744; that stretch reads PDTSKSSPTP.

This sequence belongs to the AKNA family.

The sequence is that of Protein AKNAD1 (AKNAD1) from Macaca fascicularis (Crab-eating macaque).